The sequence spans 1388 residues: ABC transporter G family member 52 (1388 aa).

The disordered stretch occupies residues 1–24; the sequence is MDDAGEICSFSRSSSSAREDDEED. Residues 135-406 form the ABC transporter 1 domain; that stretch reads TNALCITKKI…FKSVGFKCPE (272 aa). 168–175 is an ATP binding site; that stretch reads GPPGSGKT. The region spanning 484–697 is the ABC transmembrane type-2 1 domain; the sequence is ELLKANIYRE…ALNALAVNEF (214 aa). The next 7 membrane-spanning stretches (helical) occupy residues 503–523, 541–561, 590–610, 621–641, 646–666, 675–695, and 732–752; these read LYIF…TVFI, ALFY…GPAI, IPIS…VIGF, FLVL…IVAL, VIAS…CGFI, WWIW…LAVN, and ISIG…TICL. An ABC transporter 2 domain is found at 791–1043; it reads ITFEDIRYSV…ELIKYFEAIQ (253 aa). 836–843 contributes to the ATP binding site; the sequence is GVSGAGKT. Positions 1116 to 1330 constitute an ABC transmembrane type-2 2 domain; it reads TQWLACLWKQ…TLNGLLTSQF (215 aa). Helical transmembrane passes span 1136 to 1156, 1167 to 1183, 1223 to 1243, 1250 to 1270, 1280 to 1300, 1305 to 1325, and 1357 to 1377; these read IVVR…MFWG, LFSI…AMGV, FPYI…MVGY, FLWY…YGMM, MSAV…GFLI, IPVW…LNGL, and LLWV…FLFG.

The protein belongs to the ABC transporter superfamily. ABCG family. PDR (TC 3.A.1.205) subfamily.

Its subcellular location is the membrane. In terms of biological role, may be a general defense protein. This is ABC transporter G family member 52 from Oryza sativa subsp. japonica (Rice).